The chain runs to 468 residues: Two-component response regulator-like APRR9 (468 aa).

Positions 38-156 (RVLLVESDYS…ELKNLWQHVW (119 aa)) constitute a Response regulatory domain. Composition is skewed to polar residues over residues 168 to 177 (HAQSLPASQH) and 194 to 203 (DQGSGAQAIN). 3 disordered regions span residues 168–203 (HAQS…QAIN), 302–416 (VVAL…SRSQ), and 442–468 (RKKL…STKS). Basic and acidic residues predominate over residues 315–327 (TPTESHEKLRKVT). A compositionally biased stretch (polar residues) spans 328–364 (SDQGSATTSSNQENIGSSSVSFRNQVLQSTVTNQKQD). 2 stretches are compositionally biased toward basic and acidic residues: residues 371 to 382 (SNREKAASKEVE) and 400 to 409 (EKPKEEESAK). The region spanning 417 to 459 (REAALMKFRLKRKDRCFDKKVRYQSRKKLAEQRPRVKGQFVRT) is the CCT domain. Over residues 458-468 (RTVNSDASTKS) the composition is skewed to polar residues.

It belongs to the ARR-like family. Phosphorylated. Phosphorylation varies throughout the diurnal cycle.

Its subcellular location is the nucleus. In terms of biological role, transcriptional repressor of CCA1 and LHY, and positive regulator of LWD1 and LWD2 expression. Controls photoperiodic flowering response and temperature compensation. Involved in the positive and negative feedback loops of the circadian clock. Expression of several members of the ARR-like family is controlled by circadian rhythm. Regulated at the transcriptional level by a corepressor complex consisting of ELF4, ELF3, and LUX. APRR9, APRR7, and APRR5 coordinately act on the upstream region of the target genes to repress their expression from noon until midnight. The particular coordinated sequential expression of APRR9, APRR7, APRR5, APRR3 and APPR1 result to circadian waves that may be at the basis of the endogenous circadian clock. This Arabidopsis thaliana (Mouse-ear cress) protein is Two-component response regulator-like APRR9 (APRR9).